Consider the following 146-residue polypeptide: Ribonuclease H (146 aa).

Residues 1-143 enclose the RNase H type-1 domain; that stretch reads MEKKVTIYTD…CDELARLAVR (143 aa). 4 residues coordinate Mg(2+): Asp10, Glu48, Asp70, and Asp135.

This sequence belongs to the RNase H family. As to quaternary structure, monomer. Mg(2+) is required as a cofactor.

It is found in the cytoplasm. The enzyme catalyses Endonucleolytic cleavage to 5'-phosphomonoester.. Endonuclease that specifically degrades the RNA of RNA-DNA hybrids. This chain is Ribonuclease H, found in Chlorobium phaeovibrioides (strain DSM 265 / 1930) (Prosthecochloris vibrioformis (strain DSM 265)).